The chain runs to 194 residues: Cyclin-dependent kinase inhibitor 4 (194 aa).

A compositionally biased stretch (basic and acidic residues) spans L49–K58. Disordered regions lie at residues L49–R70 and T107–K139.

Belongs to the CDI family. ICK/KRP subfamily.

This is Cyclin-dependent kinase inhibitor 4 (KRP4) from Oryza sativa subsp. japonica (Rice).